The sequence spans 431 residues: MLTIKNWQLLSENDKKLCLSRPRQSSAIKENVLEIINQVQLSGDKALYDLTKQFDRVNLQYLQVPQEKIEQANIPKNALNAITQAIGTISSYHQSLLPENTEISTASGITIRNVYRPIQKVGLYVPGGNKTPLVSSLLMQAIPAKVAGCPIKVLCTPPDAEGEINEHILVAARLCGIDTIYAIGGAQAIAAMAYGTESVIKVDKIFGPGNSYVTQAKTLVAIDADGAAIDMPAGPSEVMILADTEANPEFIAADLLAQAEHGPDSQVILICDECELANQVNQQLEIQMSYLSRIEFIKRSLANSRIIICSNQSEQLDIINSYAPEHLIINRKNPEPWVEKIVAAGTVFLGSWAAETMGDYVTGSNHVLPTSGFARNHSGLSTLDFMTRFTVQAINQEAIRNLGPAAMTLAELEGLDAHANAVQIRLNTLGD.

NAD(+) is bound by residues Y124, Q187, and N210. The substrate site is built by S236, Q258, and H261. Residues Q258 and H261 each contribute to the Zn(2+) site. Catalysis depends on proton acceptor residues E325 and H326. 4 residues coordinate substrate: H326, D359, E413, and H418. A Zn(2+)-binding site is contributed by D359. Residue H418 coordinates Zn(2+).

It belongs to the histidinol dehydrogenase family. Zn(2+) is required as a cofactor.

The enzyme catalyses L-histidinol + 2 NAD(+) + H2O = L-histidine + 2 NADH + 3 H(+). Its pathway is amino-acid biosynthesis; L-histidine biosynthesis; L-histidine from 5-phospho-alpha-D-ribose 1-diphosphate: step 9/9. Its function is as follows. Catalyzes the sequential NAD-dependent oxidations of L-histidinol to L-histidinaldehyde and then to L-histidine. The protein is Histidinol dehydrogenase of Legionella pneumophila subsp. pneumophila (strain Philadelphia 1 / ATCC 33152 / DSM 7513).